We begin with the raw amino-acid sequence, 168 residues long: G/U mismatch-specific DNA glycosylase (168 aa).

This sequence belongs to the uracil-DNA glycosylase (UDG) superfamily. TDG/mug family. As to quaternary structure, binds DNA as a monomer.

The protein localises to the cytoplasm. It carries out the reaction Specifically hydrolyzes mismatched double-stranded DNA and polynucleotides, releasing free uracil.. Excises ethenocytosine and uracil, which can arise by alkylation or deamination of cytosine, respectively, from the corresponding mispairs with guanine in ds-DNA. It is capable of hydrolyzing the carbon-nitrogen bond between the sugar-phosphate backbone of the DNA and the mispaired base. The complementary strand guanine functions in substrate recognition. Required for DNA damage lesion repair in stationary-phase cells. The sequence is that of G/U mismatch-specific DNA glycosylase from Klebsiella pneumoniae subsp. pneumoniae (strain ATCC 700721 / MGH 78578).